A 185-amino-acid polypeptide reads, in one-letter code: Ribosome-recycling factor (185 aa).

Belongs to the RRF family.

Its subcellular location is the cytoplasm. Responsible for the release of ribosomes from messenger RNA at the termination of protein biosynthesis. May increase the efficiency of translation by recycling ribosomes from one round of translation to another. The chain is Ribosome-recycling factor from Geotalea daltonii (strain DSM 22248 / JCM 15807 / FRC-32) (Geobacter daltonii).